The sequence spans 360 residues: 3-isopropylmalate dehydrogenase (360 aa).

NAD(+) is bound at residue 76 to 89 (GPKWEPLDYSLRPE). Substrate is bound by residues R96, R106, R134, and D224. Mg(2+) is bound by residues D224, D248, and D252. NAD(+) is bound at residue 282 to 294 (GSAPDIAGRGIAN).

The protein belongs to the isocitrate and isopropylmalate dehydrogenases family. LeuB type 1 subfamily. Homodimer. Mg(2+) serves as cofactor. The cofactor is Mn(2+).

The protein localises to the cytoplasm. It carries out the reaction (2R,3S)-3-isopropylmalate + NAD(+) = 4-methyl-2-oxopentanoate + CO2 + NADH. The protein operates within amino-acid biosynthesis; L-leucine biosynthesis; L-leucine from 3-methyl-2-oxobutanoate: step 3/4. In terms of biological role, catalyzes the oxidation of 3-carboxy-2-hydroxy-4-methylpentanoate (3-isopropylmalate) to 3-carboxy-4-methyl-2-oxopentanoate. The product decarboxylates to 4-methyl-2 oxopentanoate. The protein is 3-isopropylmalate dehydrogenase of Methylococcus capsulatus (strain ATCC 33009 / NCIMB 11132 / Bath).